The primary structure comprises 354 residues: Chorismate synthase (354 aa).

NADP(+) is bound at residue Arg-48. Residues 126–128 (RAS), Ala-278, 293–297 (KPIPS), and Arg-319 each bind FMN.

This sequence belongs to the chorismate synthase family. As to quaternary structure, homotetramer. FMNH2 is required as a cofactor.

It catalyses the reaction 5-O-(1-carboxyvinyl)-3-phosphoshikimate = chorismate + phosphate. The protein operates within metabolic intermediate biosynthesis; chorismate biosynthesis; chorismate from D-erythrose 4-phosphate and phosphoenolpyruvate: step 7/7. Its function is as follows. Catalyzes the anti-1,4-elimination of the C-3 phosphate and the C-6 proR hydrogen from 5-enolpyruvylshikimate-3-phosphate (EPSP) to yield chorismate, which is the branch point compound that serves as the starting substrate for the three terminal pathways of aromatic amino acid biosynthesis. This reaction introduces a second double bond into the aromatic ring system. This Desulfosudis oleivorans (strain DSM 6200 / JCM 39069 / Hxd3) (Desulfococcus oleovorans) protein is Chorismate synthase.